Reading from the N-terminus, the 437-residue chain is Phosphomethylpyrimidine synthase (437 aa).

Substrate contacts are provided by residues N69, M98, Y127, H163, S185 to G187, D226 to R229, and E265. Position 269 (H269) interacts with Zn(2+). Y292 lines the substrate pocket. H333 is a Zn(2+) binding site. C409, C412, and C416 together coordinate [4Fe-4S] cluster.

It belongs to the ThiC family. It depends on [4Fe-4S] cluster as a cofactor.

The enzyme catalyses 5-amino-1-(5-phospho-beta-D-ribosyl)imidazole + S-adenosyl-L-methionine = 4-amino-2-methyl-5-(phosphooxymethyl)pyrimidine + CO + 5'-deoxyadenosine + formate + L-methionine + 3 H(+). It functions in the pathway cofactor biosynthesis; thiamine diphosphate biosynthesis. Functionally, catalyzes the synthesis of the hydroxymethylpyrimidine phosphate (HMP-P) moiety of thiamine from aminoimidazole ribotide (AIR) in a radical S-adenosyl-L-methionine (SAM)-dependent reaction. The protein is Phosphomethylpyrimidine synthase of Clostridium botulinum (strain Kyoto / Type A2).